The following is a 159-amino-acid chain: Succinate dehydrogenase [ubiquinone] cytochrome b small subunit, mitochondrial (159 aa).

A mitochondrion-targeting transit peptide spans 1–56 (MAVLWRLSAVCGAQGGRALLLRTPVVRPAHISAFLQDRPIPEWCGVQHIHLSPGHH). Residues 57–63 (SGSKAAS) lie on the Mitochondrial matrix side of the membrane. The helical transmembrane segment at 64–85 (LHWTSERVVSVLLLGLLPAAYL) threads the bilayer. Residues 86-90 (NPCSA) are Mitochondrial intermembrane-facing. The chain crosses the membrane as a helical span at residues 91-111 (MDYSLAATLTLHGHWGLGQVV). His102 contributes to the heme b binding site. The Mitochondrial matrix segment spans residues 112–120 (TDYVHGDAS). Residue Tyr114 participates in a ubiquinone binding. Residues 121–142 (QKAAKAGLLALSALTFAGLCYF) form a helical membrane-spanning segment. At 143 to 159 (NYHDVGICKAVAMLWKL) the chain is on the mitochondrial intermembrane side.

The protein belongs to the CybS family. In terms of assembly, component of complex II composed of four subunits: the flavoprotein (FP) SDHA, iron-sulfur protein (IP) SDHB, and a cytochrome b560 composed of SDHC and SDHD.

The protein localises to the mitochondrion inner membrane. The protein operates within carbohydrate metabolism; tricarboxylic acid cycle. Membrane-anchoring subunit of succinate dehydrogenase (SDH) that is involved in complex II of the mitochondrial electron transport chain and is responsible for transferring electrons from succinate to ubiquinone (coenzyme Q). SDH also oxidizes malate to the non-canonical enol form of oxaloacetate, enol-oxaloacetate. Enol-oxaloacetate, which is a potent inhibitor of the succinate dehydrogenase activity, is further isomerized into keto-oxaloacetate. The protein is Succinate dehydrogenase [ubiquinone] cytochrome b small subunit, mitochondrial (SDHD) of Pongo abelii (Sumatran orangutan).